We begin with the raw amino-acid sequence, 140 residues long: MASLEMNDLKKIGLGLTGFGVFFTFLGVIFVFDKGLIAMGNILFLAGVTLTIGINPAIQFFTKRQNFKGTISFGLGFLLVVFGWPIFGLLLESYGFLVLFSGFWPTLAVFLQRIPLLGWLLQQPYIRSLLDRYRGRRVPV.

4 helical membrane passes run Ile-12–Phe-32, Gly-35–Asn-55, Ile-71–Leu-91, and Phe-96–Leu-116.

The protein belongs to the GOT1 family. Homodimer. No interactions with STL1, STL2, CESA1, CESA3, CESA4, CESA6, CESA7 or CESA8.

Its subcellular location is the golgi apparatus membrane. May be involved in fusion of ER-derived transport vesicles with the Golgi complex. This Arabidopsis thaliana (Mouse-ear cress) protein is Vesicle transport protein GOT1.